We begin with the raw amino-acid sequence, 601 residues long: ATP-dependent lipid A-core flippase (601 aa).

The next 5 helical transmembrane spans lie at 33–53, 72–92, 158–178, 255–275, and 283–303; these read CVAVVAMIAYAAITPFFAKLI, VSLMLIGLSVLRGIAGFLSEY, VIGLMALMVYQNPVLSLVFLV, LGGGVIHLISVAGVAGILYVV, and TITPGSLMAFIAAMAMMLSPI. One can recognise an ABC transmembrane type-1 domain in the interval 34–315; that stretch reads VAVVAMIAYA…LSQVVSVMQR (282 aa). Residues 347-583 enclose the ABC transporter domain; it reads IEYRHVSLVY…RGGYADLYAM (237 aa). 381–388 is an ATP binding site; sequence GQSGSGKT.

Belongs to the ABC transporter superfamily. Lipid exporter (TC 3.A.1.106) family. Homodimer.

Its subcellular location is the cell inner membrane. It catalyses the reaction ATP + H2O + lipid A-core oligosaccharideSide 1 = ADP + phosphate + lipid A-core oligosaccharideSide 2.. Functionally, involved in lipopolysaccharide (LPS) biosynthesis. Translocates lipid A-core from the inner to the outer leaflet of the inner membrane. Transmembrane domains (TMD) form a pore in the inner membrane and the ATP-binding domain (NBD) is responsible for energy generation. The polypeptide is ATP-dependent lipid A-core flippase (Methylococcus capsulatus (strain ATCC 33009 / NCIMB 11132 / Bath)).